The chain runs to 469 residues: Interstitial collagenase (469 aa).

Residues 1–19 (MFSLLLLLLLLCNTGSHGF) form the signal peptide. A propeptide spans 20-99 (PAATSETQEQ…PRCGVPDVAE (80 aa)) (activation peptide). Serine 57 carries the phosphoserine modification. The Cysteine switch motif lies at 90–97 (PRCGVPDV). Residue cysteine 92 participates in Zn(2+) binding. The N-linked (GlcNAc...) asparagine glycan is linked to asparagine 120. Ca(2+)-binding residues include aspartate 124 and aspartate 158. Residues histidine 168 and aspartate 170 each coordinate Zn(2+). 4 residues coordinate Ca(2+): aspartate 175, glycine 176, glycine 178, and asparagine 180. Histidine 183 serves as a coordination point for Zn(2+). Ca(2+)-binding residues include glycine 190, glycine 192, and aspartate 194. Histidine 196 is a binding site for Zn(2+). Aspartate 198, glutamate 199, and glutamate 201 together coordinate Ca(2+). Histidine 218 contacts Zn(2+). Glutamate 219 is an active-site residue. Zn(2+) contacts are provided by histidine 222 and histidine 228. Residue threonine 274 is modified to Phosphothreonine. Hemopexin repeat units follow at residues 275 to 324 (PQVC…WPQV), 325 to 371 (PNGL…FGFP), 374 to 422 (VKNI…FPGI), and 423 to 466 (GNKV…WFNC). Cysteine 278 and cysteine 466 are disulfide-bonded. The Ca(2+) site is built by aspartate 285 and glutamine 329. Tyrosine 360 is subject to Phosphotyrosine; by PKDCC. The Ca(2+) site is built by aspartate 378 and aspartate 427.

It belongs to the peptidase M10A family. It depends on Ca(2+) as a cofactor. The cofactor is Zn(2+). Post-translationally, undergoes autolytic cleavage to produce a N-terminal fragment having reduced collagenolytic activity. In terms of processing, tyrosine phosphorylated in platelets by PKDCC/VLK.

It localises to the secreted. The protein localises to the extracellular space. Its subcellular location is the extracellular matrix. The enzyme catalyses Cleavage of the triple helix of collagen at about three-quarters of the length of the molecule from the N-terminus, at 775-Gly-|-Ile-776 in the alpha1(I) chain. Cleaves synthetic substrates and alpha-macroglobulins at bonds where P1' is a hydrophobic residue.. With respect to regulation, can be activated without removal of the activation peptide. Its function is as follows. Cleaves collagens of types I, II, and III at one site in the helical domain. Also cleaves collagens of types VII and X. The sequence is that of Interstitial collagenase (MMP1) from Sus scrofa (Pig).